A 22-amino-acid polypeptide reads, in one-letter code: Mu-conotoxin CnIIIC (22 aa).

Glutamine 1 bears the Pyrrolidone carboxylic acid; partial mark. Intrachain disulfides connect cysteine 3–cysteine 15, cysteine 4–cysteine 21, and cysteine 10–cysteine 22. Cysteine 22 is modified (cysteine amide).

It belongs to the conotoxin M superfamily. As to expression, expressed by the venom duct.

It is found in the secreted. Functionally, mu-conotoxins block voltage-gated sodium channels (Nav). This synthetic toxin blocks both voltage-gated sodium channels and nicotinic acetylcholine receptor (nAChR). Inhibits the skeletal muscle rNav1.4/SCN4A (IC(50)=1.3 nM) and the brain rNav1.2/SCN2A in a long-lasting manner. A low inhibition is also observed on neuronal mNav1.6/SCN8A and mNav1.7/SCN9A. Modestly blocks nAChR alpha-3/beta-2 subtype (IC(50)=450 nM) (partially reversible) and, to a lesser extent, alpha-7 and alpha-4/beta-2 subtypes (reversible). In vitro, decreases twitch tension in mouse hemidiaphragms (IC(50)=150 nM), and displays a high blocking effect in mouse extensor digitorum longus muscles (IC(50)=46 nM). The sequence is that of Mu-conotoxin CnIIIC from Conus consors (Singed cone).